We begin with the raw amino-acid sequence, 470 residues long: Glutamate--tRNA ligase (470 aa).

The 'HIGH' region motif lies at 9 to 19 (PSPTGFLHVGG). A 'KMSKS' region motif is present at residues 236–240 (RLSKR). Lysine 239 contacts ATP.

It belongs to the class-I aminoacyl-tRNA synthetase family. Glutamate--tRNA ligase type 1 subfamily. As to quaternary structure, monomer.

Its subcellular location is the cytoplasm. It carries out the reaction tRNA(Glu) + L-glutamate + ATP = L-glutamyl-tRNA(Glu) + AMP + diphosphate. Functionally, catalyzes the attachment of glutamate to tRNA(Glu) in a two-step reaction: glutamate is first activated by ATP to form Glu-AMP and then transferred to the acceptor end of tRNA(Glu). The polypeptide is Glutamate--tRNA ligase (Legionella pneumophila (strain Paris)).